The chain runs to 144 residues: MLMPKRVKYRREHRGKMRGRAKGGTEVAFGEFGLQAQAASWITNRQIEAARRAMTRYMKRGGKVWIKIFPSKPYTAKPLEVRMGSGKGAPEGWVAVVKPGKIMFEIAGVSEEVAREALRLAAHKLPVKCKFVKREENGGESNEN.

Belongs to the universal ribosomal protein uL16 family. Part of the 50S ribosomal subunit.

In terms of biological role, binds 23S rRNA and is also seen to make contacts with the A and possibly P site tRNAs. In Bacillus cereus (strain ATCC 10987 / NRS 248), this protein is Large ribosomal subunit protein uL16.